A 353-amino-acid chain; its full sequence is uncharacterized protein (353 aa).

A signal peptide spans Met1–Ala30.

Monomer.

This is an uncharacterized protein from Escherichia coli (strain K12).